The chain runs to 168 residues: Small ribosomal subunit protein uS4 (168 aa).

The 65-residue stretch at 103-167 (RRLQTIVYKK…SPFKKSIEEK (65 aa)) folds into the S4 RNA-binding domain.

The protein belongs to the universal ribosomal protein uS4 family. In terms of assembly, part of the 30S ribosomal subunit. Contacts protein S5. The interaction surface between S4 and S5 is involved in control of translational fidelity.

Functionally, one of the primary rRNA binding proteins, it binds directly to 16S rRNA where it nucleates assembly of the body of the 30S subunit. In terms of biological role, with S5 and S12 plays an important role in translational accuracy. The protein is Small ribosomal subunit protein uS4 of Staphylothermus marinus (strain ATCC 43588 / DSM 3639 / JCM 9404 / F1).